The primary structure comprises 321 residues: Olfactory receptor 52N4 (321 aa).

The Extracellular portion of the chain corresponds to Met-1 to Leu-27. Asn-5 carries an N-linked (GlcNAc...) asparagine glycan. The chain crosses the membrane as a helical span at residues Trp-28–Leu-48. Residues Tyr-49–Ala-56 are Cytoplasmic-facing. Residues Leu-57–Ser-77 form a helical membrane-spanning segment. The Extracellular portion of the chain corresponds to Ser-78 to Val-101. The cysteines at positions 99 and 191 are disulfide-linked. A helical transmembrane segment spans residues Gln-102 to Leu-122. The Cytoplasmic segment spans residues Asp-123–Pro-141. The chain crosses the membrane as a helical span at residues Val-142–Thr-162. Over Phe-163–Ala-198 the chain is Extracellular. Residues Ile-199–Ser-219 traverse the membrane as a helical segment. The Cytoplasmic segment spans residues Tyr-220–Ala-239. The chain crosses the membrane as a helical span at residues Phe-240–Ser-260. The Extracellular segment spans residues Phe-261–His-276. The helical transmembrane segment at Ile-277 to Val-297 threads the bilayer. The Cytoplasmic segment spans residues Lys-298–Met-321.

It belongs to the G-protein coupled receptor 1 family.

The protein resides in the cell membrane. Functionally, odorant receptor. This chain is Olfactory receptor 52N4 (OR52N4), found in Homo sapiens (Human).